Reading from the N-terminus, the 105-residue chain is UPF0166 protein aq_450 (105 aa).

This sequence belongs to the UPF0166 family.

This chain is UPF0166 protein aq_450, found in Aquifex aeolicus (strain VF5).